A 276-amino-acid chain; its full sequence is MRIRFSKMHGLGNDFVVIDGISQTVRLTPEKIRKLADRHFGVGCDQVLLVEIPEQPNVDFRYRIFNCDGSEVENCGNGARCFAVFVRERRLTGKRVIRVETAGGIIELRVQDDEQVSVDMGVPRLLPEKIPFVADQQAVTYPLDVAGQVCSISAVSMGNPHAVMLVDDVKSAPVGQLGPLVENHPRFPARVNAGFLQVVSRDEINLRVYERGAGETLACGTGACAAVVTGRLRGLLNDTVKVNLPGGSLRISWPGEGHSVIMTGPAVTVFHGQIKL.

Substrate is bound by residues N13, Q46, and N66. C75 functions as the Proton donor in the catalytic mechanism. Residues 76-77 (GN), N159, N192, and 210-211 (ER) contribute to the substrate site. C219 functions as the Proton acceptor in the catalytic mechanism. Residue 220-221 (GT) coordinates substrate.

This sequence belongs to the diaminopimelate epimerase family. In terms of assembly, homodimer.

Its subcellular location is the cytoplasm. It carries out the reaction (2S,6S)-2,6-diaminopimelate = meso-2,6-diaminopimelate. The protein operates within amino-acid biosynthesis; L-lysine biosynthesis via DAP pathway; DL-2,6-diaminopimelate from LL-2,6-diaminopimelate: step 1/1. Its function is as follows. Catalyzes the stereoinversion of LL-2,6-diaminopimelate (L,L-DAP) to meso-diaminopimelate (meso-DAP), a precursor of L-lysine and an essential component of the bacterial peptidoglycan. This chain is Diaminopimelate epimerase, found in Cellvibrio japonicus (strain Ueda107) (Pseudomonas fluorescens subsp. cellulosa).